The chain runs to 532 residues: Copalyl diphosphate synthase (532 aa).

The short motif at aspartate 313–alanine 318 is the DXDDTA motif element. The QXXDGSW motif signature appears at glutamine 443–tryptophan 449.

This sequence belongs to the terpene synthase family. Mg(2+) is required as a cofactor.

It carries out the reaction (2E,6E,10E)-geranylgeranyl diphosphate = (+)-copalyl diphosphate. In terms of biological role, involved in the biosynthesis of the mercapturic acid derivative diterpene cyslabdan A, a potentiator of the beta-lactam antibiotic imipenem. Catalyzes the conversion of geranylgeranyl diphosphate (GGDP) into (+)-copalyl diphosphate. The polypeptide is Copalyl diphosphate synthase (Streptomyces cyslabdanicus).